A 131-amino-acid chain; its full sequence is D-ribose pyranase (131 aa).

The active-site Proton donor is His-20. Residues Asp-28, His-98, and Tyr-120–Asn-122 each bind substrate.

This sequence belongs to the RbsD / FucU family. RbsD subfamily. As to quaternary structure, homodecamer.

The protein localises to the cytoplasm. It catalyses the reaction beta-D-ribopyranose = beta-D-ribofuranose. It participates in carbohydrate metabolism; D-ribose degradation; D-ribose 5-phosphate from beta-D-ribopyranose: step 1/2. Catalyzes the interconversion of beta-pyran and beta-furan forms of D-ribose. The chain is D-ribose pyranase from Bacillus cereus (strain ATCC 14579 / DSM 31 / CCUG 7414 / JCM 2152 / NBRC 15305 / NCIMB 9373 / NCTC 2599 / NRRL B-3711).